Here is a 451-residue protein sequence, read N- to C-terminus: Exodeoxyribonuclease 7 large subunit (451 aa).

This sequence belongs to the XseA family. As to quaternary structure, heterooligomer composed of large and small subunits.

The protein localises to the cytoplasm. The catalysed reaction is Exonucleolytic cleavage in either 5'- to 3'- or 3'- to 5'-direction to yield nucleoside 5'-phosphates.. In terms of biological role, bidirectionally degrades single-stranded DNA into large acid-insoluble oligonucleotides, which are then degraded further into small acid-soluble oligonucleotides. The chain is Exodeoxyribonuclease 7 large subunit from Neisseria meningitidis serogroup B (strain ATCC BAA-335 / MC58).